Reading from the N-terminus, the 213-residue chain is MARYIGPKLKLSRREGTDLGLKSGVKPYDVKTKKSARPPGQHGVSRNKSSEYSLQLREKQKVKRIYGVLERQFANYYKEAARKRGATGENLLAMLESRLDNVVYRMGFGSTRAEARQLVSHRTVMVKKAGRDEFVRVNIPSIQLQDGDVIAIQEKSREQLRIKNAIELATQRGIPEWLDVDHSKLQGTFKKAPDRIDLPAEINESLIVELYSK.

The interval 16 to 53 (GTDLGLKSGVKPYDVKTKKSARPPGQHGVSRNKSSEYS) is disordered. Residues 44–53 (VSRNKSSEYS) are compositionally biased toward polar residues. One can recognise an S4 RNA-binding domain in the interval 97–163 (SRLDNVVYRM…EKSREQLRIK (67 aa)).

Belongs to the universal ribosomal protein uS4 family. Part of the 30S ribosomal subunit. Contacts protein S5. The interaction surface between S4 and S5 is involved in control of translational fidelity.

One of the primary rRNA binding proteins, it binds directly to 16S rRNA where it nucleates assembly of the body of the 30S subunit. In terms of biological role, with S5 and S12 plays an important role in translational accuracy. The chain is Small ribosomal subunit protein uS4 from Psychrobacter arcticus (strain DSM 17307 / VKM B-2377 / 273-4).